We begin with the raw amino-acid sequence, 1089 residues long: WD repeat-containing protein on Y chromosome (1089 aa).

WD repeat units follow at residues 155–199 (EEVA…IRTA), 207–249 (PHAV…RGPF), 329–368 (RIPL…EPSA), 372–411 (GHNG…LLQT), 462–501 (THAA…RKII), 514–553 (TIDI…VIRN), and 601–641 (FHTD…RRYS). The interval 661 to 684 (KRSKRWASRAPHSGSHMMSHTGSH) is disordered. Residues 672-684 (HSGSHMMSHTGSH) are compositionally biased toward low complexity. 2 WD repeats span residues 767–806 (KTGD…IPEA) and 850–889 (GHLK…LGTL). The tract at residues 1049 to 1089 (LNIKLPSRRRSDRTNDPRNMRTAKTRGDMGLGHRSSHTSQN) is disordered.

This chain is WD repeat-containing protein on Y chromosome, found in Drosophila willistoni (Fruit fly).